Reading from the N-terminus, the 95-residue chain is Endoribonuclease VapD homolog (95 aa).

This sequence belongs to the VapD ribonuclease family. Homodimer.

Cleaves ssRNA, mostly between U:A. The polypeptide is Endoribonuclease VapD homolog (Helicobacter pylori (strain ATCC 700392 / 26695) (Campylobacter pylori)).